The primary structure comprises 311 residues: Ornithine carbamoyltransferase (311 aa).

Residues 56-59 (STRT), Q83, R107, and 134-137 (HPTQ) contribute to the carbamoyl phosphate site. L-ornithine contacts are provided by residues N166, D230, and 234–235 (SM). Carbamoyl phosphate contacts are provided by residues 270 to 271 (CL) and K298.

Belongs to the aspartate/ornithine carbamoyltransferase superfamily. OTCase family.

The protein resides in the cytoplasm. The enzyme catalyses carbamoyl phosphate + L-ornithine = L-citrulline + phosphate + H(+). It participates in amino-acid degradation; L-arginine degradation via ADI pathway; carbamoyl phosphate from L-arginine: step 2/2. Functionally, reversibly catalyzes the transfer of the carbamoyl group from carbamoyl phosphate (CP) to the N(epsilon) atom of ornithine (ORN) to produce L-citrulline. This Ignicoccus hospitalis (strain KIN4/I / DSM 18386 / JCM 14125) protein is Ornithine carbamoyltransferase.